The following is a 471-amino-acid chain: Probable ribonuclease FAU-1 (471 aa).

Belongs to the FAU-1 family.

Its function is as follows. Probable RNase involved in rRNA stability through maturation and/or degradation of precursor rRNAs. Binds to RNA in loop regions with AU-rich sequences. The polypeptide is Probable ribonuclease FAU-1 (Thermococcus gammatolerans (strain DSM 15229 / JCM 11827 / EJ3)).